A 440-amino-acid polypeptide reads, in one-letter code: Thymidine phosphorylase (440 aa).

It belongs to the thymidine/pyrimidine-nucleoside phosphorylase family. Homodimer.

It catalyses the reaction thymidine + phosphate = 2-deoxy-alpha-D-ribose 1-phosphate + thymine. The protein operates within pyrimidine metabolism; dTMP biosynthesis via salvage pathway; dTMP from thymine: step 1/2. The enzymes which catalyze the reversible phosphorolysis of pyrimidine nucleosides are involved in the degradation of these compounds and in their utilization as carbon and energy sources, or in the rescue of pyrimidine bases for nucleotide synthesis. This chain is Thymidine phosphorylase, found in Escherichia coli (strain 55989 / EAEC).